Here is a 118-residue protein sequence, read N- to C-terminus: Hydrogenase maturation factor HypA (118 aa).

Residue histidine 2 participates in Ni(2+) binding. Zn(2+) contacts are provided by cysteine 74, cysteine 77, cysteine 91, and cysteine 94.

Belongs to the HypA/HybF family.

In terms of biological role, involved in the maturation of [NiFe] hydrogenases. Required for nickel insertion into the metal center of the hydrogenase. This chain is Hydrogenase maturation factor HypA, found in Helicobacter hepaticus (strain ATCC 51449 / 3B1).